The following is a 152-amino-acid chain: D-aminoacyl-tRNA deacylase (152 aa).

Residues 142–143 (GP) carry the Gly-cisPro motif, important for rejection of L-amino acids motif.

It belongs to the DTD family. In terms of assembly, homodimer.

Its subcellular location is the cytoplasm. The enzyme catalyses glycyl-tRNA(Ala) + H2O = tRNA(Ala) + glycine + H(+). It catalyses the reaction a D-aminoacyl-tRNA + H2O = a tRNA + a D-alpha-amino acid + H(+). In terms of biological role, an aminoacyl-tRNA editing enzyme that deacylates mischarged D-aminoacyl-tRNAs. Also deacylates mischarged glycyl-tRNA(Ala), protecting cells against glycine mischarging by AlaRS. Acts via tRNA-based rather than protein-based catalysis; rejects L-amino acids rather than detecting D-amino acids in the active site. By recycling D-aminoacyl-tRNA to D-amino acids and free tRNA molecules, this enzyme counteracts the toxicity associated with the formation of D-aminoacyl-tRNA entities in vivo and helps enforce protein L-homochirality. The protein is D-aminoacyl-tRNA deacylase of Burkholderia cenocepacia (strain HI2424).